A 144-amino-acid polypeptide reads, in one-letter code: Ribosomal RNA large subunit methyltransferase H (144 aa).

Residues Leu63, Gly92, and 111 to 116 (LSPMTF) each bind S-adenosyl-L-methionine.

The protein belongs to the RNA methyltransferase RlmH family. As to quaternary structure, homodimer.

It is found in the cytoplasm. The catalysed reaction is pseudouridine(1915) in 23S rRNA + S-adenosyl-L-methionine = N(3)-methylpseudouridine(1915) in 23S rRNA + S-adenosyl-L-homocysteine + H(+). Its function is as follows. Specifically methylates the pseudouridine at position 1915 (m3Psi1915) in 23S rRNA. The protein is Ribosomal RNA large subunit methyltransferase H of Parasynechococcus marenigrum (strain WH8102).